A 115-amino-acid chain; its full sequence is Glutaredoxin-like protein C5orf63 homolog (115 aa).

Cysteine 40 and cysteine 43 are disulfide-bonded.

The protein belongs to the glutaredoxin family. YDR286C subfamily.

This is Glutaredoxin-like protein C5orf63 homolog from Mus musculus (Mouse).